Consider the following 154-residue polypeptide: Myoglobin (154 aa).

The Globin domain maps to 2–148; sequence GLSDGEWQLV…FRNDIAAKYK (147 aa). Ser4 carries the phosphoserine modification. His65 is a nitrite binding site. Residue His65 coordinates O2. Phosphothreonine is present on Thr68. His94 provides a ligand contact to heme b.

It belongs to the globin family. Monomeric.

It is found in the cytoplasm. The protein resides in the sarcoplasm. It carries out the reaction Fe(III)-heme b-[protein] + nitric oxide + H2O = Fe(II)-heme b-[protein] + nitrite + 2 H(+). The catalysed reaction is H2O2 + AH2 = A + 2 H2O. Functionally, monomeric heme protein which primary function is to store oxygen and facilitate its diffusion within muscle tissues. Reversibly binds oxygen through a pentacoordinated heme iron and enables its timely and efficient release as needed during periods of heightened demand. Depending on the oxidative conditions of tissues and cells, and in addition to its ability to bind oxygen, it also has a nitrite reductase activity whereby it regulates the production of bioactive nitric oxide. Under stress conditions, like hypoxia and anoxia, it also protects cells against reactive oxygen species thanks to its pseudoperoxidase activity. The polypeptide is Myoglobin (MB) (Ctenodactylus gundi (Northern gundi)).